Reading from the N-terminus, the 419-residue chain is Histone acetyltransferase type B subunit 2 (419 aa).

WD repeat units follow at residues 131–171 (PHDG…VEAL), 177–217 (YHTE…KNIK), 225–265 (AHTD…IIHN), 267–307 (NTKK…NPLY), and 311–351 (GHED…AEQT). The segment at 353–357 (DEIED) is interaction with the histone H4 N-terminus. Residues 368 to 408 (GHKTSINDIAVNPNINWLVASAEEDNIVQIWKCSSNIPRIG) form a WD 6 repeat.

The protein belongs to the WD repeat RBAP46/RBAP48/MSI1 family. As to quaternary structure, component of the HAT-B complex composed of at least HAT1 and HAT2. The HAT-B complex binds to histone H4 tail.

It localises to the cytoplasm. It is found in the nucleus. In terms of biological role, regulatory subunit of the histone acetylase B (HAT-B) complex. The complex acetylates Lys-12 of histone H4 which is required for telomeric silencing. The polypeptide is Histone acetyltransferase type B subunit 2 (HAT2) (Candida glabrata (strain ATCC 2001 / BCRC 20586 / JCM 3761 / NBRC 0622 / NRRL Y-65 / CBS 138) (Yeast)).